Consider the following 258-residue polypeptide: Acetylglutamate kinase (258 aa).

Substrate-binding positions include Gly41–Gly42, Arg63, and Asn156.

It belongs to the acetylglutamate kinase family. ArgB subfamily.

The protein resides in the cytoplasm. The catalysed reaction is N-acetyl-L-glutamate + ATP = N-acetyl-L-glutamyl 5-phosphate + ADP. It functions in the pathway amino-acid biosynthesis; L-arginine biosynthesis; N(2)-acetyl-L-ornithine from L-glutamate: step 2/4. In terms of biological role, catalyzes the ATP-dependent phosphorylation of N-acetyl-L-glutamate. The polypeptide is Acetylglutamate kinase (Bacillus pumilus (strain SAFR-032)).